The chain runs to 507 residues: ATP synthase subunit alpha, chloroplastic (507 aa).

G170 to T177 is an ATP binding site. At T257 the chain carries Phosphothreonine.

Belongs to the ATPase alpha/beta chains family. As to quaternary structure, F-type ATPases have 2 components, CF(1) - the catalytic core - and CF(0) - the membrane proton channel. CF(1) has five subunits: alpha(3), beta(3), gamma(1), delta(1), epsilon(1). CF(0) has four main subunits: a, b, b' and c.

It localises to the plastid. The protein localises to the chloroplast thylakoid membrane. It carries out the reaction ATP + H2O + 4 H(+)(in) = ADP + phosphate + 5 H(+)(out). Produces ATP from ADP in the presence of a proton gradient across the membrane. The alpha chain is a regulatory subunit. This Barbarea verna (Land cress) protein is ATP synthase subunit alpha, chloroplastic.